The sequence spans 447 residues: Asparagine--tRNA ligase (447 aa).

Belongs to the class-II aminoacyl-tRNA synthetase family. In terms of assembly, homodimer.

Its subcellular location is the cytoplasm. The catalysed reaction is tRNA(Asn) + L-asparagine + ATP = L-asparaginyl-tRNA(Asn) + AMP + diphosphate + H(+). This chain is Asparagine--tRNA ligase, found in Lactococcus lactis subsp. cremoris (strain SK11).